A 93-amino-acid chain; its full sequence is Putative defensin-like protein 190 (93 aa).

An N-terminal signal peptide occupies residues 1 to 30 (MKMAKAAATNDFGFITCLVIFLVLAGISNG). 4 disulfide bridges follow: cysteine 39–cysteine 89, cysteine 55–cysteine 75, cysteine 60–cysteine 84, and cysteine 64–cysteine 86.

The protein belongs to the DEFL family.

It is found in the secreted. The polypeptide is Putative defensin-like protein 190 (Arabidopsis thaliana (Mouse-ear cress)).